The sequence spans 108 residues: Large ribosomal subunit protein uL24 (108 aa).

This sequence belongs to the universal ribosomal protein uL24 family. As to quaternary structure, part of the 50S ribosomal subunit.

In terms of biological role, one of two assembly initiator proteins, it binds directly to the 5'-end of the 23S rRNA, where it nucleates assembly of the 50S subunit. Its function is as follows. One of the proteins that surrounds the polypeptide exit tunnel on the outside of the subunit. This is Large ribosomal subunit protein uL24 from Desulfosudis oleivorans (strain DSM 6200 / JCM 39069 / Hxd3) (Desulfococcus oleovorans).